The sequence spans 154 residues: Crossover junction endodeoxyribonuclease RuvC (154 aa).

Active-site residues include Asp-7, Glu-67, and Asp-139. Residues Asp-7, Glu-67, and Asp-139 each coordinate Mg(2+).

This sequence belongs to the RuvC family. As to quaternary structure, homodimer which binds Holliday junction (HJ) DNA. The HJ becomes 2-fold symmetrical on binding to RuvC with unstacked arms; it has a different conformation from HJ DNA in complex with RuvA. In the full resolvosome a probable DNA-RuvA(4)-RuvB(12)-RuvC(2) complex forms which resolves the HJ. The cofactor is Mg(2+).

The protein localises to the cytoplasm. It catalyses the reaction Endonucleolytic cleavage at a junction such as a reciprocal single-stranded crossover between two homologous DNA duplexes (Holliday junction).. Functionally, the RuvA-RuvB-RuvC complex processes Holliday junction (HJ) DNA during genetic recombination and DNA repair. Endonuclease that resolves HJ intermediates. Cleaves cruciform DNA by making single-stranded nicks across the HJ at symmetrical positions within the homologous arms, yielding a 5'-phosphate and a 3'-hydroxyl group; requires a central core of homology in the junction. The consensus cleavage sequence is 5'-(A/T)TT(C/G)-3'. Cleavage occurs on the 3'-side of the TT dinucleotide at the point of strand exchange. HJ branch migration catalyzed by RuvA-RuvB allows RuvC to scan DNA until it finds its consensus sequence, where it cleaves and resolves the cruciform DNA. The sequence is that of Crossover junction endodeoxyribonuclease RuvC from Prochlorococcus marinus (strain NATL2A).